A 299-amino-acid chain; its full sequence is Acetaldehyde dehydrogenase 2 (299 aa).

C130 acts as the Acyl-thioester intermediate in catalysis. NAD(+) is bound by residues 161–169 (SVGPGTRKN) and N272.

This sequence belongs to the acetaldehyde dehydrogenase family.

It catalyses the reaction acetaldehyde + NAD(+) + CoA = acetyl-CoA + NADH + H(+). This chain is Acetaldehyde dehydrogenase 2, found in Burkholderia lata (strain ATCC 17760 / DSM 23089 / LMG 22485 / NCIMB 9086 / R18194 / 383).